A 722-amino-acid chain; its full sequence is A-type ATP synthase subunit I (722 aa).

Basic and acidic residues predominate over residues 309 to 321 (DYKPTGHDQHVPA). The interval 309 to 352 (DYKPTGHDQHVPADDGADAATDGGTTASFDETDSPPVIQDNPGP) is disordered. Positions 326-335 (DAATDGGTTA) are enriched in low complexity. 8 consecutive transmembrane segments (helical) span residues 384 to 404 (FYGFMIGDLGYGVLYALLGFW), 419 to 439 (GVAMWAGGFTALFGVLYGEVF), 474 to 494 (LAASLVFGIAHLAIGYVFGFV), 505 to 525 (AALESGGQLLLMAGVGVWLFS), 554 to 574 (LAAAVVGLVLVTLGEGAAGFL), 590 to 610 (IAAVLLAKAGMAYVVNLLVFG), 639 to 659 (FMLFSGEAHGEVLFPGLMHMG), and 662 to 682 (GILIGVLVLLVGHALVLALGV).

This sequence belongs to the V-ATPase 116 kDa subunit family. Has multiple subunits with at least A(3), B(3), C, D, E, F, H, I and proteolipid K(x).

The protein resides in the cell membrane. Component of the A-type ATP synthase that produces ATP from ADP in the presence of a proton gradient across the membrane. In Halobacterium salinarum (strain ATCC 700922 / JCM 11081 / NRC-1) (Halobacterium halobium), this protein is A-type ATP synthase subunit I.